The primary structure comprises 551 residues: Sialic acid-binding Ig-like lectin 5 (551 aa).

The signal sequence occupies residues 1 to 16 (MLPLLLLPLLWGGSLQ). Topologically, residues 17–441 (EKPVYELQVQ…LGTGVVPAAL (425 aa)) are extracellular. The 118-residue stretch at 19–136 (PVYELQVQKS…KYSYQQNKLN (118 aa)) folds into the Ig-like V-type domain. Intrachain disulfides connect cysteine 36–cysteine 170, cysteine 41–cysteine 101, and cysteine 164–cysteine 213. A glycan (N-linked (GlcNAc...) asparagine) is linked at asparagine 100. Residues arginine 119, lysine 127, and serine 129 each coordinate N-acetylneuraminate. The Ig-like C2-type 1 domain occupies 146 to 229 (PDIHFLEPLE…AQVTTERTVQ (84 aa)). The tract at residues 189–210 (DPETTRSSELTLTPRPEDHGTN) is disordered. N-linked (GlcNAc...) asparagine glycosylation is found at asparagine 210, asparagine 231, and asparagine 253. One can recognise an Ig-like C2-type 2 domain in the interval 236-330 (PQTITIFRNG…GFLQIFLNLS (95 aa)). Residues cysteine 269 and cysteine 314 are joined by a disulfide bond. 4 N-linked (GlcNAc...) asparagine glycosylation sites follow: asparagine 328, asparagine 375, asparagine 384, and asparagine 393. The chain crosses the membrane as a helical span at residues 442 to 462 (GGAGVMALLCICLCLIFFLIV). At 463-551 (KARRKQAAGR…TEYSEIKTSK (89 aa)) the chain is on the cytoplasmic side. The disordered stretch occupies residues 469 to 551 (AAGRPEKMDD…TEYSEIKTSK (83 aa)). The ITIM motif motif lies at 518 to 523 (LHYASL). Positions 528–537 (MKSREPKDQE) are enriched in basic and acidic residues. Positions 542-547 (TEYSEI) match the SLAM-like motif motif.

Belongs to the immunoglobulin superfamily. SIGLEC (sialic acid binding Ig-like lectin) family. As to expression, expressed by monocytic/myeloid lineage cells. Found at high levels in peripheral blood leukocytes, spleen, bone marrow and at lower levels in lymph node, lung, appendix, placenta, pancreas and thymus. Expressed by monocytes and neutrophils but absent from leukemic cell lines representing early stages of myelomonocytic differentiation.

It localises to the membrane. In terms of biological role, putative adhesion molecule that mediates sialic-acid dependent binding to cells. Binds equally to alpha-2,3-linked and alpha-2,6-linked sialic acid. The sialic acid recognition site may be masked by cis interactions with sialic acids on the same cell surface. This chain is Sialic acid-binding Ig-like lectin 5 (SIGLEC5), found in Homo sapiens (Human).